Here is a 350-residue protein sequence, read N- to C-terminus: Protein-glutamate methylesterase/protein-glutamine glutaminase 6 (350 aa).

Residues arginine 11 to glutamate 126 form the Response regulatory domain. 4-aspartylphosphate is present on aspartate 62. Residues glutamate 150 to alanine 347 form the CheB-type methylesterase domain. Residues serine 162, histidine 189, and aspartate 289 contribute to the active site.

It belongs to the CheB family. Phosphorylated by CheA. Phosphorylation of the N-terminal regulatory domain activates the methylesterase activity.

It localises to the cytoplasm. It carries out the reaction [protein]-L-glutamate 5-O-methyl ester + H2O = L-glutamyl-[protein] + methanol + H(+). The enzyme catalyses L-glutaminyl-[protein] + H2O = L-glutamyl-[protein] + NH4(+). In terms of biological role, involved in chemotaxis. Part of a chemotaxis signal transduction system that modulates chemotaxis in response to various stimuli. Catalyzes the demethylation of specific methylglutamate residues introduced into the chemoreceptors (methyl-accepting chemotaxis proteins or MCP) by CheR. Also mediates the irreversible deamidation of specific glutamine residues to glutamic acid. This is Protein-glutamate methylesterase/protein-glutamine glutaminase 6 from Anaeromyxobacter dehalogenans (strain 2CP-C).